Here is a 142-residue protein sequence, read N- to C-terminus: Hemoglobin subunit zeta (142 aa).

Residue Ser-2 is modified to N-acetylserine. The region spanning 2 to 142 is the Globin domain; the sequence is SLTKTERTII…VSSVLTEKYR (141 aa). Residue Thr-29 is modified to Phosphothreonine. Ser-53 carries the post-translational modification Phosphoserine. His-59 serves as a coordination point for heme b. 2 positions are modified to phosphoserine: Ser-73 and Ser-82. Residue His-88 coordinates heme b.

This sequence belongs to the globin family. As to quaternary structure, heterotetramer of two zeta chains and two epsilon chains in early embryonic hemoglobin Gower-1; two zeta chains and two gamma chains in fetal hemoglobin Portland-1. Heterotetramer of two zeta chains and two beta chains in hemoglobin Portland-2, detected in fetuses and neonates with homozygous alpha-thalassemia. Detected in fetal erythrocytes (at protein level).

Functionally, the zeta chain is an alpha-type chain of mammalian embryonic hemoglobin. The polypeptide is Hemoglobin subunit zeta (HBZ) (Homo sapiens (Human)).